The chain runs to 1179 residues: Tubulin glycylase 3B (1179 aa).

The segment covering 177–199 (NKGQTNNSNRENGGNFHSEQSPK) has biased composition (polar residues). Disordered stretches follow at residues 177–208 (NKGQ…VVSG), 250–278 (QQPQ…LPLS), 592–625 (KVLS…AVQQ), and 853–890 (QKQH…LKQD). Positions 592-601 (KVLSNTKSKD) are enriched in basic and acidic residues. Composition is skewed to polar residues over residues 614-625 (KSKSNNQNAVQQ) and 881-890 (AQSSTSLKQD). The region spanning 790-1152 (FIDFYETVDF…SMAKKGTKKN (363 aa)) is the TTL domain. ATP contacts are provided by residues 965 to 968 (QKYI), Lys978, and Asp980.

The protein localises to the cell projection. Its subcellular location is the cilium. It localises to the cytoplasm. It is found in the cytoskeleton. The protein resides in the cilium axoneme. In terms of biological role, polyglycylase which modifies tubulin, generating side chains of glycine on the gamma-carboxyl groups of specific glutamate residues within the C-terminal tail of tubulin. Polyglycylates tubulin, with a preference for alpha-tubulin toward beta-tubulin. The sequence is that of Tubulin glycylase 3B (TTLL3B) from Tetrahymena thermophila (strain SB210).